A 73-amino-acid chain; its full sequence is U3-agatoxin-Ao1k (73 aa).

An N-terminal signal peptide occupies residues 1–20 (MRTIISLLLLSAMVFAVIEA). Positions 21–34 (ISLEEGLQLFEGER) are excised as a propeptide. 4 disulfides stabilise this stretch: Cys36–Cys52, Cys43–Cys57, Cys51–Cys67, and Cys59–Cys65. Ser71 carries the serine amide modification.

This sequence belongs to the neurotoxin 07 (Beta/delta-agtx) family. 03 (aga-4) subfamily. Aga sub-subfamily. As to expression, expressed by the venom gland.

The protein resides in the secreted. In terms of biological role, insecticidal neurotoxin that modulates the insect Nav channel (DmNaV1/tipE (para/tipE)) in a unique manner, with both the activation and inactivation processes being affected. The voltage dependence of activation is shifted toward more hyperpolarized potentials (analogous to site 4 toxins) and a non-inactivating persistent sodium current is induced (site 3-like action). Interestingly, both effects take place in a voltage-dependent manner, producing a bell-shaped curve between -80 and 0 mV. Compared to beta/delta-agatoxin-1 to -3, this toxin appears to affect the insect sodium channel only weakly. This is U3-agatoxin-Ao1k from Agelena orientalis (Funnel-web spider).